A 329-amino-acid chain; its full sequence is Probable quinone oxidoreductase (329 aa).

Phosphoserine is present on Ser-191.

This sequence belongs to the zinc-containing alcohol dehydrogenase family. Quinone oxidoreductase subfamily.

It localises to the cytoplasm. It is found in the nucleus. The enzyme catalyses 2 a quinone + NADPH + H(+) = 2 a 1,4-benzosemiquinone + NADP(+). This Schizosaccharomyces pombe (strain 972 / ATCC 24843) (Fission yeast) protein is Probable quinone oxidoreductase (zta1).